We begin with the raw amino-acid sequence, 53 residues long: Large ribosomal subunit protein bL32c (53 aa).

The protein belongs to the bacterial ribosomal protein bL32 family.

Its subcellular location is the plastid. The protein localises to the chloroplast. This chain is Large ribosomal subunit protein bL32c, found in Phaseolus vulgaris (Kidney bean).